The chain runs to 275 residues: Ribosome biogenesis protein RLP7 (275 aa).

The interval 14–45 (KRKNNDRKRLEKQEQARQRQLEQKKKNDQRSK) is disordered. Residues 20 to 44 (RKRLEKQEQARQRQLEQKKKNDQRS) show a composition bias toward basic and acidic residues.

Belongs to the universal ribosomal protein uL30 family.

It localises to the nucleus. The protein resides in the nucleolus. In terms of biological role, involved in the biogenesis of the 60S ribosomal subunit. May act as a specificity factor that binds precursor rRNAs and tethers the enzymes that carry out the early 5' to 3' exonucleolytic reactions that generate the mature rRNAs. The protein is Ribosome biogenesis protein RLP7 (RLP7) of Debaryomyces hansenii (strain ATCC 36239 / CBS 767 / BCRC 21394 / JCM 1990 / NBRC 0083 / IGC 2968) (Yeast).